Reading from the N-terminus, the 216-residue chain is Peptide methionine sulfoxide reductase MsrA (216 aa).

The active site involves cysteine 58.

Belongs to the MsrA Met sulfoxide reductase family.

The catalysed reaction is L-methionyl-[protein] + [thioredoxin]-disulfide + H2O = L-methionyl-(S)-S-oxide-[protein] + [thioredoxin]-dithiol. It carries out the reaction [thioredoxin]-disulfide + L-methionine + H2O = L-methionine (S)-S-oxide + [thioredoxin]-dithiol. Functionally, has an important function as a repair enzyme for proteins that have been inactivated by oxidation. Catalyzes the reversible oxidation-reduction of methionine sulfoxide in proteins to methionine. The protein is Peptide methionine sulfoxide reductase MsrA of Azotobacter vinelandii (strain DJ / ATCC BAA-1303).